Here is a 110-residue protein sequence, read N- to C-terminus: Ribonuclease (110 aa).

The active-site Proton acceptor is Glu-73. His-102 acts as the Proton donor in catalysis.

It belongs to the ribonuclease N1/T1 family.

It localises to the secreted. Hydrolyzes phosphodiester bonds in RNA, poly- and oligoribonucleotides resulting in 3'-nucleoside monophosphates via 2',3'-cyclophosphate intermediates. The chain is Ribonuclease from Niallia circulans (Bacillus circulans).